We begin with the raw amino-acid sequence, 539 residues long: Phosphoenolpyruvate carboxykinase (ATP) (539 aa).

The substrate site is built by Arg64, Tyr206, and Lys212. Residues Lys212, His231, and 247 to 255 (GLSGTGKTT) contribute to the ATP site. Mn(2+) contacts are provided by Lys212 and His231. Asp268 lines the Mn(2+) pocket. Residues Glu296, Arg332, 448–449 (RI), and Thr454 each bind ATP. Arg332 provides a ligand contact to substrate.

It belongs to the phosphoenolpyruvate carboxykinase (ATP) family. Monomer. The cofactor is Mn(2+).

The protein localises to the cytoplasm. The catalysed reaction is oxaloacetate + ATP = phosphoenolpyruvate + ADP + CO2. It functions in the pathway carbohydrate biosynthesis; gluconeogenesis. Involved in the gluconeogenesis. Catalyzes the conversion of oxaloacetate (OAA) to phosphoenolpyruvate (PEP) through direct phosphoryl transfer between the nucleoside triphosphate and OAA. The chain is Phosphoenolpyruvate carboxykinase (ATP) from Erwinia tasmaniensis (strain DSM 17950 / CFBP 7177 / CIP 109463 / NCPPB 4357 / Et1/99).